Here is a 123-residue protein sequence, read N- to C-terminus: Class I hydrophobin 2 (123 aa).

Positions 1-16 (MYAYTVIAFLAASVAA) are cleaved as a signal peptide. Disulfide bonds link C35-C97, C43-C91, C44-C72, and C98-C116.

The protein belongs to the fungal hydrophobin family.

The protein resides in the secreted. It is found in the cell wall. Aerial growth, conidiation, and dispersal of filamentous fungi in the environment rely upon a capability of their secreting small amphipathic proteins called hydrophobins (HPBs) with low sequence identity. Class I can self-assemble into an outermost layer of rodlet bundles on aerial cell surfaces, conferring cellular hydrophobicity that supports fungal growth, development and dispersal; whereas Class II form highly ordered films at water-air interfaces through intermolecular interactions but contribute nothing to the rodlet structure. HYD1 and HYD2 are required for the structural integrity of the long aerial chains of microconidia. Does not seem to be important for the ability to cause seedling disease. This is Class I hydrophobin 2 from Gibberella moniliformis (Maize ear and stalk rot fungus).